Consider the following 464-residue polypeptide: Pup--protein ligase (464 aa).

E14 serves as a coordination point for Mg(2+). R58 contacts ATP. Y60 contacts Mg(2+). Residue D62 is the Proton acceptor of the active site. E68 is a binding site for Mg(2+). The ATP site is built by T71 and W430.

The protein belongs to the Pup ligase/Pup deamidase family. Pup-conjugating enzyme subfamily.

It catalyses the reaction ATP + [prokaryotic ubiquitin-like protein]-L-glutamate + [protein]-L-lysine = ADP + phosphate + N(6)-([prokaryotic ubiquitin-like protein]-gamma-L-glutamyl)-[protein]-L-lysine.. It participates in protein degradation; proteasomal Pup-dependent pathway. Its pathway is protein modification; protein pupylation. Functionally, catalyzes the covalent attachment of the prokaryotic ubiquitin-like protein modifier Pup to the proteasomal substrate proteins, thereby targeting them for proteasomal degradation. This tagging system is termed pupylation. The ligation reaction involves the side-chain carboxylate of the C-terminal glutamate of Pup and the side-chain amino group of a substrate lysine. The polypeptide is Pup--protein ligase (Micrococcus luteus (strain ATCC 4698 / DSM 20030 / JCM 1464 / CCM 169 / CCUG 5858 / IAM 1056 / NBRC 3333 / NCIMB 9278 / NCTC 2665 / VKM Ac-2230) (Micrococcus lysodeikticus)).